A 155-amino-acid chain; its full sequence is 6,7-dimethyl-8-ribityllumazine synthase (155 aa).

5-amino-6-(D-ribitylamino)uracil contacts are provided by residues phenylalanine 24, 58 to 60, and 82 to 84; these read AFE and VLI. A (2S)-2-hydroxy-3-oxobutyl phosphate-binding site is contributed by 87 to 88; that stretch reads AT. Histidine 90 (proton donor) is an active-site residue. Position 115 (phenylalanine 115) interacts with 5-amino-6-(D-ribitylamino)uracil. Arginine 129 contacts (2S)-2-hydroxy-3-oxobutyl phosphate.

Belongs to the DMRL synthase family.

It catalyses the reaction (2S)-2-hydroxy-3-oxobutyl phosphate + 5-amino-6-(D-ribitylamino)uracil = 6,7-dimethyl-8-(1-D-ribityl)lumazine + phosphate + 2 H2O + H(+). It participates in cofactor biosynthesis; riboflavin biosynthesis; riboflavin from 2-hydroxy-3-oxobutyl phosphate and 5-amino-6-(D-ribitylamino)uracil: step 1/2. Its function is as follows. Catalyzes the formation of 6,7-dimethyl-8-ribityllumazine by condensation of 5-amino-6-(D-ribitylamino)uracil with 3,4-dihydroxy-2-butanone 4-phosphate. This is the penultimate step in the biosynthesis of riboflavin. The sequence is that of 6,7-dimethyl-8-ribityllumazine synthase from Chloroherpeton thalassium (strain ATCC 35110 / GB-78).